A 573-amino-acid chain; its full sequence is PCNA-interacting partner (573 aa).

2 disordered regions span residues 470 to 505 (VGKA…SKGK) and 531 to 560 (PKVP…RGKL).

It belongs to the PARI family. Interacts with RAD51 and PCNA. Interacts with PARP1. Interacts with TASOR. In terms of tissue distribution, expressed in the ovary, Sertoli cells of the testis and in granular cells within the cerebellum.

Its subcellular location is the cytoplasm. It is found in the nucleus. Required to suppress inappropriate homologous recombination, thereby playing a central role DNA repair and in the maintenance of genomic stability. Antagonizes homologous recombination by interfering with the formation of the RAD51-DNA homologous recombination structure. Binds single-strand DNA and poly(A) homopolymers. Positively regulate the poly(ADP-ribosyl)ation activity of PARP1; however such function may be indirect. In Mus musculus (Mouse), this protein is PCNA-interacting partner (Parpbp).